The following is a 396-amino-acid chain: MNRWLKNMLHNEAASGVLIFLAAVAAMLIENSSLEPYYNSFLNIPVAVQFSELKIAKPLLLWINDGLMAVFFLLVGLELKREFLEGQLAQPANVVLPVVGAVGGIVGPALIYVMFNYTNPVALQGWAVPTATDIAFAMGVLALLGKRVPAAIKLFLLTLAIIDDLVAIVIIAIFYTSDLSVGSLTVAGGAIALLFLLNRIGVKGIAPYVLVGMVLWVAVLKSGVHATLAGVVLAMAIPIKGETPEHGSPLHALEHDLHHVVGLVILPLFAFANAGVSLAGLGLNVLLEPVAMGIGLGLLLGKQIGVMGAVWLANLLGVAKKPESLSWTQLYGVALLCGIGFTMSLFISSLAFEHSGAQVVAGAADAGHARLGILSGSLVSGVLGYLVLRFSLARKG.

The next 12 helical transmembrane spans lie at 9–29 (LHNEAASGVLIFLAAVAAMLI), 59–79 (LLLWINDGLMAVFFLLVGLEL), 95–115 (VLPVVGAVGGIVGPALIYVMF), 125–145 (GWAVPTATDIAFAMGVLALLG), 154–174 (LFLLTLAIIDDLVAIVIIAIF), 177–197 (SDLSVGSLTVAGGAIALLFLL), 200–220 (IGVKGIAPYVLVGMVLWVAVL), 223–243 (GVHATLAGVVLAMAIPIKGET), 260–280 (VVGLVILPLFAFANAGVSLAG), 281–301 (LGLNVLLEPVAMGIGLGLLLG), 332–352 (GVALLCGIGFTMSLFISSLAF), and 373–393 (ILSGSLVSGVLGYLVLRFSLA).

The protein belongs to the NhaA Na(+)/H(+) (TC 2.A.33) antiporter family.

The protein localises to the cell inner membrane. The enzyme catalyses Na(+)(in) + 2 H(+)(out) = Na(+)(out) + 2 H(+)(in). Na(+)/H(+) antiporter that extrudes sodium in exchange for external protons. The polypeptide is Na(+)/H(+) antiporter NhaA 1 (Magnetococcus marinus (strain ATCC BAA-1437 / JCM 17883 / MC-1)).